We begin with the raw amino-acid sequence, 320 residues long: ATP-dependent 6-phosphofructokinase (320 aa).

G12 serves as a coordination point for ATP. 22-26 provides a ligand contact to ADP; sequence RAVVR. ATP is bound by residues 73–74 and 103–106; these read RF and GDGS. D104 provides a ligand contact to Mg(2+). 126 to 128 provides a ligand contact to substrate; the sequence is TID. The active-site Proton acceptor is D128. R155 serves as a coordination point for ADP. Residues R163 and 170–172 contribute to the substrate site; that span reads MGR. Residues 186-188 and 214-216 contribute to the ADP site; these read GAE and KNH. Substrate is bound by residues E223, R244, and 250 to 253; that span reads HIQR.

This sequence belongs to the phosphofructokinase type A (PFKA) family. ATP-dependent PFK group I subfamily. Prokaryotic clade 'B1' sub-subfamily. Homotetramer. The cofactor is Mg(2+).

Its subcellular location is the cytoplasm. The catalysed reaction is beta-D-fructose 6-phosphate + ATP = beta-D-fructose 1,6-bisphosphate + ADP + H(+). The protein operates within carbohydrate degradation; glycolysis; D-glyceraldehyde 3-phosphate and glycerone phosphate from D-glucose: step 3/4. With respect to regulation, allosterically activated by ADP and other diphosphonucleosides, and allosterically inhibited by phosphoenolpyruvate. Catalyzes the phosphorylation of D-fructose 6-phosphate to fructose 1,6-bisphosphate by ATP, the first committing step of glycolysis. This chain is ATP-dependent 6-phosphofructokinase, found in Teredinibacter turnerae (strain ATCC 39867 / T7901).